Reading from the N-terminus, the 117-residue chain is Transcription elongation factor SPT4 (117 aa).

The tract at residues 1-40 is interaction with SUPT5H; it reads MSLETVPKDLRHLRACLLCSLVKTIDQFEYDGCDNCESYL. Residues 16–36 form a C4-type zinc finger; it reads CLLCSLVKTIDQFEYDGCDNC.

The protein belongs to the SPT4 family. Interacts with SUPT5H to form the DSIF complex. DSIF interacts with RNA polymerase II and with the positive transcription elongation factor b complex (P-TEFb complex), which is composed of CDK9 and cyclin-T.

The protein resides in the nucleus. Its function is as follows. May function as a component of the DRB sensitivity-inducing factor complex (DSIF complex), which regulates transcription elongation by RNA polymerase II. Probably enhances transcriptional pausing at sites proximal to the promoter, which may facilitate the assembly of an elongation competent RNA polymerase II complex. Also acts to stimulate transcriptional elongation at low nucleotide concentrations. Regulation of transcriptional elongation by this protein is required for the expression of genes which control neuronal development. In Danio rerio (Zebrafish), this protein is Transcription elongation factor SPT4 (supt4h1).